A 258-amino-acid polypeptide reads, in one-letter code: MSVSNKLGDLASKVYENVLLEEVKKYPRPRHIGIITDGNRRYARNVGISENEGHVKGKEKVEEVVDWCMELDIRIVTFYAFSTENFRRSPEEVDFLFHLIDNAFKSLLKDERVYKNRINVKVIGNLSILPAYLRQTIHIVEETTKNFNNYQLNLAIGYGGREEILDAIKRITRDAMDGKLNIDELDEEKFRMYLYDGRIPDPDLILRTSGEERISNFLLWQSAYSELYFSDVYWPEFSKLDFLRAIYSYQRRQRRFGR.

Asp-37 is an active-site residue. Asp-37 serves as a coordination point for Mg(2+). Substrate-binding positions include 38 to 41, His-54, and 82 to 84; these read GNRR and STE. Residue Asn-85 is the Proton acceptor of the active site. Residues Phe-86, Arg-88, Arg-207, and 213-215 contribute to the substrate site; that span reads RIS. Glu-226 contributes to the Mg(2+) binding site.

It belongs to the UPP synthase family. Homodimer. Mg(2+) is required as a cofactor.

The enzyme catalyses geranylgeranyl diphosphate + 7 isopentenyl diphosphate = tri-trans,hepta-cis-undecaprenyl diphosphate + 7 diphosphate. In terms of biological role, catalyzes the sequential condensation of isopentenyl diphosphate (IPP) with geranylgeranyl diphosphate (GGPP) to yield (2Z,6Z,10Z,14Z,18Z,22Z,26Z,30E,34E,38E)-undecaprenyl diphosphate (tritrans,heptacis-UPP). It is probably the precursor of glycosyl carrier lipids. The polypeptide is Tritrans,polycis-undecaprenyl-diphosphate synthase (geranylgeranyl-diphosphate specific) (Thermoplasma acidophilum (strain ATCC 25905 / DSM 1728 / JCM 9062 / NBRC 15155 / AMRC-C165)).